Reading from the N-terminus, the 167-residue chain is MRVEVGQIVNTHGIKGEIKVKSNSDFTDVRFQPGQVLTVVHNNNDLEYTVKSHRVHKGLHMLTFEGINNINDIEHLKGSSIYQERDHEDIVLEENEFYYSDIIGCTVFDDQETPIGRVINIFETGANDVWVIKESKEYLIPYIADVVKEVDVENKKIIITPMEGLLD.

Residues 94 to 165 enclose the PRC barrel domain; it reads ENEFYYSDII…KIIITPMEGL (72 aa).

This sequence belongs to the RimM family. As to quaternary structure, binds ribosomal protein uS19.

The protein resides in the cytoplasm. Functionally, an accessory protein needed during the final step in the assembly of 30S ribosomal subunit, possibly for assembly of the head region. Essential for efficient processing of 16S rRNA. May be needed both before and after RbfA during the maturation of 16S rRNA. It has affinity for free ribosomal 30S subunits but not for 70S ribosomes. The sequence is that of Ribosome maturation factor RimM from Staphylococcus aureus (strain MRSA252).